Reading from the N-terminus, the 537-residue chain is Proline--tRNA ligase (537 aa).

The protein belongs to the class-II aminoacyl-tRNA synthetase family. ProS type 3 subfamily. Homodimer.

The protein localises to the cytoplasm. It catalyses the reaction tRNA(Pro) + L-proline + ATP = L-prolyl-tRNA(Pro) + AMP + diphosphate. In terms of biological role, catalyzes the attachment of proline to tRNA(Pro) in a two-step reaction: proline is first activated by ATP to form Pro-AMP and then transferred to the acceptor end of tRNA(Pro). This chain is Proline--tRNA ligase, found in Nanoarchaeum equitans (strain Kin4-M).